Reading from the N-terminus, the 314-residue chain is 4-hydroxy-3-methylbut-2-enyl diphosphate reductase (314 aa).

C12 contacts [4Fe-4S] cluster. H41 and H74 together coordinate (2E)-4-hydroxy-3-methylbut-2-enyl diphosphate. Residues H41 and H74 each contribute to the dimethylallyl diphosphate site. Residues H41 and H74 each contribute to the isopentenyl diphosphate site. A [4Fe-4S] cluster-binding site is contributed by C96. H124 serves as a coordination point for (2E)-4-hydroxy-3-methylbut-2-enyl diphosphate. H124 lines the dimethylallyl diphosphate pocket. H124 is an isopentenyl diphosphate binding site. The active-site Proton donor is the E126. T167 contacts (2E)-4-hydroxy-3-methylbut-2-enyl diphosphate. Residue C197 coordinates [4Fe-4S] cluster. Residues S225, S226, N227, and S269 each coordinate (2E)-4-hydroxy-3-methylbut-2-enyl diphosphate. The dimethylallyl diphosphate site is built by S225, S226, N227, and S269. 4 residues coordinate isopentenyl diphosphate: S225, S226, N227, and S269.

Belongs to the IspH family. [4Fe-4S] cluster serves as cofactor.

It catalyses the reaction isopentenyl diphosphate + 2 oxidized [2Fe-2S]-[ferredoxin] + H2O = (2E)-4-hydroxy-3-methylbut-2-enyl diphosphate + 2 reduced [2Fe-2S]-[ferredoxin] + 2 H(+). The enzyme catalyses dimethylallyl diphosphate + 2 oxidized [2Fe-2S]-[ferredoxin] + H2O = (2E)-4-hydroxy-3-methylbut-2-enyl diphosphate + 2 reduced [2Fe-2S]-[ferredoxin] + 2 H(+). Its pathway is isoprenoid biosynthesis; dimethylallyl diphosphate biosynthesis; dimethylallyl diphosphate from (2E)-4-hydroxy-3-methylbutenyl diphosphate: step 1/1. It participates in isoprenoid biosynthesis; isopentenyl diphosphate biosynthesis via DXP pathway; isopentenyl diphosphate from 1-deoxy-D-xylulose 5-phosphate: step 6/6. Its function is as follows. Catalyzes the conversion of 1-hydroxy-2-methyl-2-(E)-butenyl 4-diphosphate (HMBPP) into a mixture of isopentenyl diphosphate (IPP) and dimethylallyl diphosphate (DMAPP). Acts in the terminal step of the DOXP/MEP pathway for isoprenoid precursor biosynthesis. This chain is 4-hydroxy-3-methylbut-2-enyl diphosphate reductase, found in Haemophilus influenzae (strain 86-028NP).